The chain runs to 218 residues: Superoxide dismutase [Mn] 1 (218 aa).

The Mn(2+) site is built by histidine 43, histidine 98, aspartate 180, and histidine 184.

The protein belongs to the iron/manganese superoxide dismutase family. In terms of assembly, homodimer. It depends on Mn(2+) as a cofactor.

The enzyme catalyses 2 superoxide + 2 H(+) = H2O2 + O2. In terms of biological role, destroys superoxide anion radicals which are normally produced within the cells and which are toxic to biological systems. The sequence is that of Superoxide dismutase [Mn] 1 (sodA1) from Bacillus cereus (strain ATCC 14579 / DSM 31 / CCUG 7414 / JCM 2152 / NBRC 15305 / NCIMB 9373 / NCTC 2599 / NRRL B-3711).